A 284-amino-acid chain; its full sequence is Bifunctional protein FolD (284 aa).

Residues 166-168 (GAS) and Ile-232 contribute to the NADP(+) site.

This sequence belongs to the tetrahydrofolate dehydrogenase/cyclohydrolase family. Homodimer.

The enzyme catalyses (6R)-5,10-methylene-5,6,7,8-tetrahydrofolate + NADP(+) = (6R)-5,10-methenyltetrahydrofolate + NADPH. It catalyses the reaction (6R)-5,10-methenyltetrahydrofolate + H2O = (6R)-10-formyltetrahydrofolate + H(+). Its pathway is one-carbon metabolism; tetrahydrofolate interconversion. Functionally, catalyzes the oxidation of 5,10-methylenetetrahydrofolate to 5,10-methenyltetrahydrofolate and then the hydrolysis of 5,10-methenyltetrahydrofolate to 10-formyltetrahydrofolate. This Shewanella sp. (strain W3-18-1) protein is Bifunctional protein FolD.